Reading from the N-terminus, the 219-residue chain is MLLTSLLQVFACCLVLPAQVTAFYYYTSGAERKCFHKELSKGTLFQATYKAQIYDDQLQNYRDAGAQDFGVLIDIEETFDDNHLVVHQKGSASGDLTFLASDSGEHKICIQPEAGGWLIKAKTKIDVEFQVGSDEKLDSKGKATIDILHAKVNVLNSKIGEIRREQKLMRDREATFRDASEAVNSRAMWWIVIQLIVLAVTCGWQMKHLGKFFVKQKIL.

An N-terminal signal peptide occupies residues Met1–Ala22. At Phe23–Arg186 the chain is on the lumenal side. A GOLD domain is found at Arg32–Val131. The chain crosses the membrane as a helical span at residues Ala187–Lys207. Over His208–Leu219 the chain is Cytoplasmic.

It belongs to the EMP24/GP25L family. In terms of assembly, associates with EMP24, ERV25 and ERP2.

The protein localises to the endoplasmic reticulum membrane. Functionally, involved in vesicular protein trafficking. The sequence is that of Protein ERP1 (ERP1) from Saccharomyces cerevisiae (strain ATCC 204508 / S288c) (Baker's yeast).